We begin with the raw amino-acid sequence, 100 residues long: Co-chaperonin GroES (100 aa).

It belongs to the GroES chaperonin family. In terms of assembly, heptamer of 7 subunits arranged in a ring. Interacts with the chaperonin GroEL.

Its subcellular location is the cytoplasm. Its function is as follows. Together with the chaperonin GroEL, plays an essential role in assisting protein folding. The GroEL-GroES system forms a nano-cage that allows encapsulation of the non-native substrate proteins and provides a physical environment optimized to promote and accelerate protein folding. GroES binds to the apical surface of the GroEL ring, thereby capping the opening of the GroEL channel. The protein is Co-chaperonin GroES of Mycolicibacterium smegmatis (strain ATCC 700084 / mc(2)155) (Mycobacterium smegmatis).